The sequence spans 300 residues: Protease HtpX homolog (300 aa).

The next 2 helical transmembrane spans lie at 7-24 and 29-46; these read GILM…GALI and GAII…FTFW. His130 lines the Zn(2+) pocket. Residue Glu131 is part of the active site. His134 is a Zn(2+) binding site. The next 2 helical transmembrane spans lie at 145–165 and 174–194; these read VTAT…FFGG and PMGL…AGLV. Glu203 provides a ligand contact to Zn(2+).

This sequence belongs to the peptidase M48B family. Zn(2+) serves as cofactor.

Its subcellular location is the cell inner membrane. The chain is Protease HtpX homolog from Cereibacter sphaeroides (strain ATCC 17029 / ATH 2.4.9) (Rhodobacter sphaeroides).